The following is a 644-amino-acid chain: Arginine--tRNA ligase (644 aa).

The 'HIGH' region motif lies at 134–144 (VNPTKPLHMGH).

The protein belongs to the class-I aminoacyl-tRNA synthetase family.

It localises to the cytoplasm. The enzyme catalyses tRNA(Arg) + L-arginine + ATP = L-arginyl-tRNA(Arg) + AMP + diphosphate. The protein is Arginine--tRNA ligase of Thermococcus sibiricus (strain DSM 12597 / MM 739).